The primary structure comprises 425 residues: Serine--tRNA ligase (425 aa).

Residue 227–229 participates in L-serine binding; the sequence is TAE. ATP-binding positions include 258 to 260 and Val-274; that span reads RRE. Glu-281 serves as a coordination point for L-serine. 347–350 lines the ATP pocket; the sequence is ETHS. Thr-382 contacts L-serine.

Belongs to the class-II aminoacyl-tRNA synthetase family. Type-1 seryl-tRNA synthetase subfamily. In terms of assembly, homodimer. The tRNA molecule binds across the dimer.

It is found in the cytoplasm. It carries out the reaction tRNA(Ser) + L-serine + ATP = L-seryl-tRNA(Ser) + AMP + diphosphate + H(+). It catalyses the reaction tRNA(Sec) + L-serine + ATP = L-seryl-tRNA(Sec) + AMP + diphosphate + H(+). The protein operates within aminoacyl-tRNA biosynthesis; selenocysteinyl-tRNA(Sec) biosynthesis; L-seryl-tRNA(Sec) from L-serine and tRNA(Sec): step 1/1. Functionally, catalyzes the attachment of serine to tRNA(Ser). Is also able to aminoacylate tRNA(Sec) with serine, to form the misacylated tRNA L-seryl-tRNA(Sec), which will be further converted into selenocysteinyl-tRNA(Sec). The protein is Serine--tRNA ligase of Deinococcus radiodurans (strain ATCC 13939 / DSM 20539 / JCM 16871 / CCUG 27074 / LMG 4051 / NBRC 15346 / NCIMB 9279 / VKM B-1422 / R1).